The primary structure comprises 263 residues: 4'-phosphopantetheinyl transferase pptA (263 aa).

This sequence belongs to the P-Pant transferase superfamily.

It carries out the reaction apo-[ACP] + CoA = holo-[ACP] + adenosine 3',5'-bisphosphate + H(+). In terms of biological role, transfers the 4'-phosphopantetheine moiety from coenzyme A to a Ser of an acyl-carrier-protein. Activates the peptidyl carrier protein (PCP) domains of surfactin synthas. In Paxillus involutus (Naked brimcap), this protein is 4'-phosphopantetheinyl transferase pptA (pptA).